A 430-amino-acid polypeptide reads, in one-letter code: Gamma-glutamyl phosphate reductase (430 aa).

Belongs to the gamma-glutamyl phosphate reductase family.

The protein localises to the cytoplasm. It carries out the reaction L-glutamate 5-semialdehyde + phosphate + NADP(+) = L-glutamyl 5-phosphate + NADPH + H(+). The protein operates within amino-acid biosynthesis; L-proline biosynthesis; L-glutamate 5-semialdehyde from L-glutamate: step 2/2. Catalyzes the NADPH-dependent reduction of L-glutamate 5-phosphate into L-glutamate 5-semialdehyde and phosphate. The product spontaneously undergoes cyclization to form 1-pyrroline-5-carboxylate. This chain is Gamma-glutamyl phosphate reductase, found in Rhodopseudomonas palustris (strain ATCC BAA-98 / CGA009).